The chain runs to 594 residues: NADH-quinone oxidoreductase subunit C/D (594 aa).

Residues 1–185 (MTTGSALYIP…DPFSLNLAKQ (185 aa)) form an NADH dehydrogenase I subunit C region. Residues 209 to 594 (DYMFLNLGPN…IDFVMADVDR (386 aa)) are NADH dehydrogenase I subunit D.

This sequence in the N-terminal section; belongs to the complex I 30 kDa subunit family. It in the C-terminal section; belongs to the complex I 49 kDa subunit family. NDH-1 is composed of 13 different subunits. Subunits NuoB, CD, E, F, and G constitute the peripheral sector of the complex.

It is found in the cell inner membrane. The enzyme catalyses a quinone + NADH + 5 H(+)(in) = a quinol + NAD(+) + 4 H(+)(out). NDH-1 shuttles electrons from NADH, via FMN and iron-sulfur (Fe-S) centers, to quinones in the respiratory chain. The immediate electron acceptor for the enzyme in this species is believed to be ubiquinone. Couples the redox reaction to proton translocation (for every two electrons transferred, four hydrogen ions are translocated across the cytoplasmic membrane), and thus conserves the redox energy in a proton gradient. The sequence is that of NADH-quinone oxidoreductase subunit C/D from Pseudomonas fluorescens (strain Pf0-1).